The primary structure comprises 143 residues: Cofilin (143 aa).

Residues 5–137 (GVAVADESLN…AYESVLEKVS (133 aa)) enclose the ADF-H domain.

It belongs to the actin-binding proteins ADF family.

The protein localises to the cytoplasm. Its subcellular location is the cytoskeleton. It is found in the nucleus matrix. Its function is as follows. Controls reversibly actin polymerization and depolymerization in a pH-sensitive manner. It has the ability to bind G- and F-actin in a 1:1 ratio of cofilin to actin. Binding to F-actin is regulated by tropomyosin. It is the major component of intranuclear and cytoplasmic actin rods. Required for accumulation of actin at the cell division site via depolymerizing actin at the cell ends. In association with myosin II has a role in the assembly of the contractile ring via severing actin filaments. Involved in the maintenance of the contractile ring once formed. In association with profilin and capping protein, has a role in the mitotic reorganization of the actin cytoskeleton. This chain is Cofilin (COF1), found in Kluyveromyces lactis (strain ATCC 8585 / CBS 2359 / DSM 70799 / NBRC 1267 / NRRL Y-1140 / WM37) (Yeast).